The chain runs to 249 residues: Ubiquinone/menaquinone biosynthesis C-methyltransferase UbiE (249 aa).

S-adenosyl-L-methionine-binding positions include Thr-72, Asp-93, and 121–122 (NA).

The protein belongs to the class I-like SAM-binding methyltransferase superfamily. MenG/UbiE family.

It carries out the reaction a 2-demethylmenaquinol + S-adenosyl-L-methionine = a menaquinol + S-adenosyl-L-homocysteine + H(+). The enzyme catalyses a 2-methoxy-6-(all-trans-polyprenyl)benzene-1,4-diol + S-adenosyl-L-methionine = a 5-methoxy-2-methyl-3-(all-trans-polyprenyl)benzene-1,4-diol + S-adenosyl-L-homocysteine + H(+). It functions in the pathway quinol/quinone metabolism; menaquinone biosynthesis; menaquinol from 1,4-dihydroxy-2-naphthoate: step 2/2. Its pathway is cofactor biosynthesis; ubiquinone biosynthesis. Methyltransferase required for the conversion of demethylmenaquinol (DMKH2) to menaquinol (MKH2) and the conversion of 2-polyprenyl-6-methoxy-1,4-benzoquinol (DDMQH2) to 2-polyprenyl-3-methyl-6-methoxy-1,4-benzoquinol (DMQH2). The polypeptide is Ubiquinone/menaquinone biosynthesis C-methyltransferase UbiE (Hahella chejuensis (strain KCTC 2396)).